The chain runs to 174 residues: Gamma-crystallin S (174 aa).

2 Beta/gamma crystallin 'Greek key' domains span residues 2–40 and 41–83; these read GRIIFYEDKNFQGRRYECDSDCSDFHAFLNRCNSIRVES and GAWV…KMIH. The interval 84-89 is connecting peptide; it reads FVSGSE. 2 consecutive Beta/gamma crystallin 'Greek key' domains span residues 90-130 and 131-173; these read YKIQ…KVLD and GIWI…KRLM.

It belongs to the beta/gamma-crystallin family.

Functionally, crystallins are the dominant structural components of the vertebrate eye lens. The protein is Gamma-crystallin S (crygs) of Cyprinus carpio (Common carp).